We begin with the raw amino-acid sequence, 437 residues long: Pyrophosphate--fructose 6-phosphate 1-phosphotransferase (437 aa).

Residue glycine 27 participates in diphosphate binding. Aspartate 122 contacts Mg(2+). Residues 147–149 (TID), 193–195 (MGR), glutamate 261, and 323–326 (YELR) each bind substrate. The Proton acceptor role is filled by aspartate 149.

This sequence belongs to the phosphofructokinase type A (PFKA) family. PPi-dependent PFK group II subfamily. Clade 'Short' sub-subfamily. Homotetramer. Mg(2+) serves as cofactor. Mn(2+) is required as a cofactor.

The protein localises to the cytoplasm. It carries out the reaction beta-D-fructose 6-phosphate + diphosphate = beta-D-fructose 1,6-bisphosphate + phosphate + H(+). Its pathway is carbohydrate degradation; glycolysis; D-glyceraldehyde 3-phosphate and glycerone phosphate from D-glucose: step 3/4. Activated by AMP. Probably promotes oligomerization of the enzyme. Catalyzes the phosphorylation of D-fructose 6-phosphate, the first committing step of glycolysis. Uses inorganic phosphate (PPi) as phosphoryl donor instead of ATP like common ATP-dependent phosphofructokinases (ATP-PFKs), which renders the reaction reversible, and can thus function both in glycolysis and gluconeogenesis. Consistently, PPi-PFK can replace the enzymes of both the forward (ATP-PFK) and reverse (fructose-bisphosphatase (FBPase)) reactions. The chain is Pyrophosphate--fructose 6-phosphate 1-phosphotransferase from Naegleria fowleri (Brain eating amoeba).